The primary structure comprises 442 residues: MAKTGMYVGLDIGTTSVKVVVAEYIDSQMNIIGVGNAKSEGINRGIIVDIDKTVQAIQRAVRQAEEKAGIQIKGVSVGLPANLLEVENCQGMIAVNGDSKEITDEDVRNVASAALVRSIPPERQIVSILPQDFTVDGFEGIKDPRGMIGVRLEMYGLLFTGPKTIVHNIRKCVENAGLVVNELVITPLALTETILSDGEKDFGTIVIDMGGGQTTTAVMHDKQLKFTSLDQEGGEFVTKDISIVLNTSFNNAEALKINYGDAYPERTSANEEFPVDVIGQSEPVKVDERYLSEVISARMEQIFNKAKEALDQIEALELPGGIVLTGGAASLPGVVDLAQEIFGVNVKLYVPNQMGLRNPVFTNVISIVDYSANLSEVYQLAKIAVTGETVVAHHTTVEQEVTSYDNDSYDAPEETVYDEPEQKKSDEDVTTKIKGFFSKIFD.

Residues 401 to 428 (VTSYDNDSYDAPEETVYDEPEQKKSDED) form a disordered region. Acidic residues predominate over residues 407–419 (DSYDAPEETVYDE).

Belongs to the FtsA/MreB family. Self-interacts. Interacts with FtsZ.

Its subcellular location is the cell membrane. In terms of biological role, cell division protein that is involved in the assembly of the Z ring. May serve as a membrane anchor for the Z ring. The protein is Cell division protein FtsA of Enterococcus hirae.